The sequence spans 62 residues: Temporin-HN1 (62 aa).

The N-terminal stretch at 1–22 is a signal peptide; it reads MFTLKKSLLLLLFLGTINLSLS. A propeptide spanning residues 23 to 44 is cleaved from the precursor; it reads EQERNAEEERRDDPEEMDAEVE. Position 60 is a leucine amide (leucine 60).

Expressed by the skin glands.

It localises to the secreted. Functionally, has antimicrobial activity against some Gram-positive bacteria and fungi but has no activity against a range of Gram-negative bacteria except P.faecalis. Active against the Gram-positive bacteria S.aureus ATCC 25923 (MIC=37.5 uM), S.carnosus KHS (MIC=37.5 uM), B.licheniformis X39 (MIC=19 uM), R.rhodochrous X15 (MIC=4.8 uM), is virtually inactive against E.faecalis 981 (MIC=150 uM) and inactive against E.faecium 091299. Has some antimicrobial activity against the Gram-negative bacterium P.faecalis X29 (MIC=75 uM) and is inactive against E.coli, P.aeruginosa and S.typhi. Has antifungal activity against C.albicans ATCC 2002 (MIC=19 uM) and lower activity against the slime mold 090223 (MIC=75 uM). Has low hemolytic activity against human erythrocytes (LC(50)=75 uM). The sequence is that of Temporin-HN1 from Odorrana hainanensis (Odor frog).